Consider the following 317-residue polypeptide: Malate dehydrogenase (317 aa).

NAD(+) contacts are provided by residues 10-15 (GGGQIG) and D34. R83 and R89 together coordinate substrate. NAD(+)-binding positions include N96 and 119 to 121 (ISN). Residues N121 and R152 each coordinate substrate. The active-site Proton acceptor is H176.

Belongs to the LDH/MDH superfamily. MDH type 3 family.

It carries out the reaction (S)-malate + NAD(+) = oxaloacetate + NADH + H(+). Catalyzes the reversible oxidation of malate to oxaloacetate. In Citrifermentans bemidjiense (strain ATCC BAA-1014 / DSM 16622 / JCM 12645 / Bem) (Geobacter bemidjiensis), this protein is Malate dehydrogenase.